Here is a 1028-residue protein sequence, read N- to C-terminus: MENALTARDRVGVQDFVLLENYTSEAAFIENLRKRFKENLIYTYIGSVLVSVNPYKDLEIYSKQHMERYRGVSFYEVSPHIYAIADNSYRSLRTERKDQCILISGESGSGKTEASKKILQYYAVTCPASDQVETVKDRLLQSNPVLEAFGNAKTLRNDNSSRFGKYMDVQFDYKGAPVGGHILNYLLEKSRVVHQNHGERNFHIFYQLLEGGEEELLRRLGLDKNAQNYQYLVKGQCARVSSINDKSDWKTVRRALSIINFNEEDIEELLSIVASVLHLGNVQFASDDHSHAQVTTENQIKYIARLLAVDATAFRESLIHKKIIAKGEELNSPLNLEQAAYARDAFAKAIYGRTFSWLVRNINKSLAYKGSDIQSIGNASVIGLLDIYGFEVFQHNSFEQFCINYCNEKLQQLFIELTLKSEQEEYESEGIAWEPVQYFNNKIICDLVEEKYKGIISILDEECLRPGEATDMTFLEKLEDTVKNHPHFVTHKFGDQKLRKSLGRDEFRPLHYAGEVNYSVVGFLDKNNDLLFRNLKEVMCDSGNPIVHQCFDRTELTDKKRPETVATQFKNSLSKLMEILMSKEPSYVRCIKPNDAKQAARFDEVLIRHQVKYLGLIENVRVRRAGFAYRRKYEIFLHRYKSLCPETWPNWDGRAQDGVAVLVKSLGYKPEEYKMGRTKIFIRFPKTLFATEDALEERKQGIATFLQARWKGYVQRRNFLHMKHSAINIQSWWRGNIGRKKAAKKRWAVDVVRRFVKGFIYRNNPRCPENEYFLDYIRYSFLMNLRRNMPKSVLDKSWPVPPPSLQEASELLREMCMNNMVWAYCKRISPEMKQQLEQKVVASEIFKDKKDNYPQSVPRLFINTRLGNEEINTKILQNMENQALTYAVPVVKYDRKGYKPRRRQLLLTHNTAYIVEEAKLKQRIDYANLTGISVSSLSDNLFVLHVKCEDNKQKGDVVLQSDHVIETLTKIAITAEKIHNINIIQGSIKFIVGNGKEGIIDFTPGSELLVAKAKNGHLSVVAPRLNSR.

Position 1 is an N-acetylmethionine (Met-1). In terms of domain architecture, Myosin motor spans 12-696 (GVQDFVLLEN…TLFATEDALE (685 aa)). Residue 105 to 112 (GESGSGKT) coordinates ATP. At Lys-348 the chain carries N6-methyllysine. Residues 573–595 (LSKLMEILMSKEPSYVRCIKPND) are actin-binding. 2 consecutive IQ domains span residues 699–728 (KQGI…SAIN) and 722–751 (MKHS…AVDV). Positions 850–1024 (KDNYPQSVPR…NGHLSVVAPR (175 aa)) constitute a TH1 domain.

This sequence belongs to the TRAFAC class myosin-kinesin ATPase superfamily. Myosin family. In terms of assembly, interacts (via its IQ motifs) with calmodulin.

It is found in the cytoplasm. The protein localises to the cell membrane. Its subcellular location is the cell projection. The protein resides in the stereocilium membrane. Myosins are actin-based motor molecules with ATPase activity. Unconventional myosins serve in intracellular movements. Their highly divergent tails are presumed to bind to membranous compartments, which would be moved relative to actin filaments. Involved in egg activation by coupling dynamic actin to membrane. The chain is Unconventional myosin-Ic-A (myo1c-a) from Xenopus laevis (African clawed frog).